The chain runs to 1507 residues: Protein TIC 214 (1507 aa).

The next 6 membrane-spanning stretches (helical) occupy residues 4–24 (IYLV…LPIG), 53–73 (TILL…VLAL), 81–101 (LWVK…IYLY), 129–149 (AFLE…NPVF), 163–183 (ISTF…IFFL), and 202–222 (LVKI…SFLC).

Belongs to the TIC214 family. In terms of assembly, part of the Tic complex.

It localises to the plastid. The protein resides in the chloroplast inner membrane. Functionally, involved in protein precursor import into chloroplasts. May be part of an intermediate translocation complex acting as a protein-conducting channel at the inner envelope. The chain is Protein TIC 214 from Staurastrum punctulatum (Green alga).